A 210-amino-acid polypeptide reads, in one-letter code: Large ribosomal subunit protein uL4 (210 aa).

The interval 56–80 (FVSGGGKKPWRQKGTGRARAGSTRS) is disordered.

The protein belongs to the universal ribosomal protein uL4 family. Part of the 50S ribosomal subunit.

One of the primary rRNA binding proteins, this protein initially binds near the 5'-end of the 23S rRNA. It is important during the early stages of 50S assembly. It makes multiple contacts with different domains of the 23S rRNA in the assembled 50S subunit and ribosome. Its function is as follows. Forms part of the polypeptide exit tunnel. This chain is Large ribosomal subunit protein uL4, found in Solidesulfovibrio magneticus (strain ATCC 700980 / DSM 13731 / RS-1) (Desulfovibrio magneticus).